Consider the following 35-residue polypeptide: MEALVYTFLLVGTLGIIFFAIFFREPPRVPVKDKK.

The helical transmembrane segment at 3–23 threads the bilayer; it reads ALVYTFLLVGTLGIIFFAIFF.

This sequence belongs to the PsbT family. As to quaternary structure, PSII is composed of 1 copy each of membrane proteins PsbA, PsbB, PsbC, PsbD, PsbE, PsbF, PsbH, PsbI, PsbJ, PsbK, PsbL, PsbM, PsbT, PsbY, PsbZ, Psb30/Ycf12, at least 3 peripheral proteins of the oxygen-evolving complex and a large number of cofactors. It forms dimeric complexes.

Its subcellular location is the plastid. The protein localises to the chloroplast thylakoid membrane. Functionally, found at the monomer-monomer interface of the photosystem II (PS II) dimer, plays a role in assembly and dimerization of PSII. PSII is a light-driven water plastoquinone oxidoreductase, using light energy to abstract electrons from H(2)O, generating a proton gradient subsequently used for ATP formation. The chain is Photosystem II reaction center protein T from Chaetosphaeridium globosum (Charophycean green alga).